The following is a 95-amino-acid chain: Small ribosomal subunit protein uS15 (95 aa).

It belongs to the universal ribosomal protein uS15 family. Part of the 30S ribosomal subunit. Forms a bridge to the 50S subunit in the 70S ribosome, contacting the 23S rRNA.

One of the primary rRNA binding proteins, it binds directly to 16S rRNA where it helps nucleate assembly of the platform of the 30S subunit by binding and bridging several RNA helices of the 16S rRNA. Functionally, forms an intersubunit bridge (bridge B4) with the 23S rRNA of the 50S subunit in the ribosome. The polypeptide is Small ribosomal subunit protein uS15 (Sulfurihydrogenibium sp. (strain YO3AOP1)).